Here is a 450-residue protein sequence, read N- to C-terminus: Glucose-6-phosphate isomerase (450 aa).

E290 serves as the catalytic Proton donor. Active-site residues include H311 and K425.

Belongs to the GPI family.

Its subcellular location is the cytoplasm. It carries out the reaction alpha-D-glucose 6-phosphate = beta-D-fructose 6-phosphate. It participates in carbohydrate biosynthesis; gluconeogenesis. It functions in the pathway carbohydrate degradation; glycolysis; D-glyceraldehyde 3-phosphate and glycerone phosphate from D-glucose: step 2/4. Functionally, catalyzes the reversible isomerization of glucose-6-phosphate to fructose-6-phosphate. In Listeria innocua serovar 6a (strain ATCC BAA-680 / CLIP 11262), this protein is Glucose-6-phosphate isomerase.